Consider the following 199-residue polypeptide: MASQSRRRRPLRRPETMVPGEAAETDSELSASSEEEELYLGPSGPTRGRPTGLRVAGEAAETDSDTEPEPKAAPRDLPPLVVQRETAGETWGEEETPAPAPALSLLQLRLAESQARLDHDVAAAVSGVYRRAGRDVAALAGRLAAAQAAGLAAAHSVRLARGDLCALAERLDIVAGCRLLPDIRGVPGTEPEQDPGPRA.

The segment covering 1-11 has biased composition (basic residues); it reads MASQSRRRRPL. The segment at 1–81 is disordered; sequence MASQSRRRRP…AAPRDLPPLV (81 aa). A compositionally biased stretch (acidic residues) spans 23–38; it reads AETDSELSASSEEEEL. Over residues 39-54 the composition is skewed to low complexity; it reads YLGPSGPTRGRPTGLR. Threonine 62 carries the post-translational modification Phosphothreonine. Position 64 is a phosphoserine (serine 64).

This sequence belongs to the BLOC1S3 family. Component of the biogenesis of lysosome-related organelles complex 1 (BLOC-1) composed of BLOC1S1, BLOC1S2, BLOC1S3, BLOC1S4, BLOC1S5, BLOC1S6, DTNBP1/BLOC1S7 and SNAPIN/BLOC1S8. Octamer composed of one copy each BLOC1S1, BLOC1S2, BLOC1S3, BLOC1S4, BLOC1S5, BLOC1S6, DTNBP1/BLOC1S7 and SNAPIN/BLOC1S8. The BLOC-1 complex associates with the AP-3 protein complex and membrane protein cargos. Interacts directly with BLOC1S2. Interacts with BLOC1S4, BLOC1S5 and BLOC1S6. Phosphorylated.

The protein resides in the cytoplasm. In terms of biological role, component of the BLOC-1 complex, a complex that is required for normal biogenesis of lysosome-related organelles (LRO), such as platelet dense granules and melanosomes. In concert with the AP-3 complex, the BLOC-1 complex is required to target membrane protein cargos into vesicles assembled at cell bodies for delivery into neurites and nerve terminals. The BLOC-1 complex, in association with SNARE proteins, is also proposed to be involved in neurite extension. Plays a role in intracellular vesicle trafficking. This chain is Biogenesis of lysosome-related organelles complex 1 subunit 3 (BLOC1S3), found in Sus scrofa (Pig).